Here is a 523-residue protein sequence, read N- to C-terminus: Apoptosis inhibitor 5 (523 aa).

The interval 1 to 360 (MPTVEELYRN…HQLGRKLPDF (360 aa)) is ARM-like and Heat-like helical repeats. The interval 446 to 523 (VQKADANQKR…RGNRSRGRIY (78 aa)) is disordered. The short motif at 454 to 475 (KRTSEDTTSSSPPKKASAGPKR) is the Nuclear localization signal element. Positions 460–471 (TTSSSPPKKASA) are enriched in low complexity. Residues 487-497 (KYSSNLGSFSY) show a composition bias toward polar residues. The segment covering 502–515 (GFRGGRGRGWGGRG) has biased composition (gly residues).

Belongs to the API5 family. In terms of assembly, monomer.

The protein localises to the nucleus. The protein resides in the cytoplasm. Functionally, antiapoptotic factor that may have a role in protein assembly. This is Apoptosis inhibitor 5 (API5) from Gallus gallus (Chicken).